The chain runs to 537 residues: Cytochrome P450 monooxygenase claR (537 aa).

Residues 23–43 traverse the membrane as a helical segment; the sequence is VVTITEVALGIITLYLLGSYI. Cysteine 454 is a binding site for heme.

This sequence belongs to the cytochrome P450 family. It depends on heme as a cofactor.

It localises to the membrane. The enzyme catalyses (2E)-geranylhydroquinone + reduced [NADPH--hemoprotein reductase] + O2 = wigandol + oxidized [NADPH--hemoprotein reductase] + 2 H2O + H(+). It functions in the pathway secondary metabolite biosynthesis; terpenoid biosynthesis. In terms of biological role, cytochrome P450 monooxygenase; part of the gene cluster that mediates the biosynthesis of clavilactone A, a meroterpenoid that features a unique benzo-fused ten-membered carbocyclic ring unit with an alpha,beta-epoxy-gamma-lactone moiety, forming an intriguing 10/5/3 tricyclic nested skeleton. ClaR, ClaS and ClaT are sufficient to produce clavilactone A. ClaR acts as a macrocyclase to catalyze the oxidative cyclization of the isopentenyl to the nonterpenoid moieties to form the benzo-fused macrocycle, leading to wigantol. The biosynthesis begins with the prenyltransferase claS that transfers geranyl pyrophosphate (GPP) to hydroquinone to produces geranylhydroquinone. The cytochrome P450 monooxygenase claR then catalyzes the diradical coupling reaction between the intramolecular hydroquinone and allyl moieties to form the benzo-fused ten-membered carbocyclic ring unit of wigantol. Finally the cytochrome P450 monooxygenase claT exquisitely and stereoselectively assembles the alpha,beta-epoxy-gamma-lactone moiety, producing clavilactone A via arnebinol A. The protein is Cytochrome P450 monooxygenase claR of Ampulloclitocybe clavipes (Club foot).